Here is a 286-residue protein sequence, read N- to C-terminus: Ribose-phosphate pyrophosphokinase (286 aa).

ATP-binding positions include 34 to 36 and 91 to 93; these read DGE and RQH. Mg(2+)-binding residues include His124 and Asp161. Lys184 is an active-site residue. Residues Arg186, Asp210, and 214-218 each bind D-ribose 5-phosphate; that span reads STGGT.

The protein belongs to the ribose-phosphate pyrophosphokinase family. Class III (archaeal) subfamily. As to quaternary structure, homodimer. Requires Mg(2+) as cofactor.

Its subcellular location is the cytoplasm. The catalysed reaction is D-ribose 5-phosphate + ATP = 5-phospho-alpha-D-ribose 1-diphosphate + AMP + H(+). It functions in the pathway metabolic intermediate biosynthesis; 5-phospho-alpha-D-ribose 1-diphosphate biosynthesis; 5-phospho-alpha-D-ribose 1-diphosphate from D-ribose 5-phosphate (route I): step 1/1. In terms of biological role, involved in the biosynthesis of the central metabolite phospho-alpha-D-ribosyl-1-pyrophosphate (PRPP) via the transfer of pyrophosphoryl group from ATP to 1-hydroxyl of ribose-5-phosphate (Rib-5-P). In Thermoplasma volcanium (strain ATCC 51530 / DSM 4299 / JCM 9571 / NBRC 15438 / GSS1), this protein is Ribose-phosphate pyrophosphokinase.